Consider the following 231-residue polypeptide: Large ribosomal subunit protein uL1 (231 aa).

The protein belongs to the universal ribosomal protein uL1 family. As to quaternary structure, part of the 50S ribosomal subunit.

Its function is as follows. Binds directly to 23S rRNA. The L1 stalk is quite mobile in the ribosome, and is involved in E site tRNA release. Functionally, protein L1 is also a translational repressor protein, it controls the translation of the L11 operon by binding to its mRNA. The protein is Large ribosomal subunit protein uL1 of Staphylococcus carnosus (strain TM300).